Consider the following 775-residue polypeptide: 5-methyltetrahydropteroyltriglutamate--homocysteine methyltransferase (775 aa).

5-methyltetrahydropteroyltri-L-glutamate contacts are provided by residues 16-19 (REMK) and lysine 115. L-homocysteine is bound by residues 435-437 (IGS) and glutamate 488. L-methionine contacts are provided by residues 435–437 (IGS) and glutamate 488. Residues 519-520 (RC) and tryptophan 565 contribute to the 5-methyltetrahydropteroyltri-L-glutamate site. Aspartate 603 is an L-homocysteine binding site. Aspartate 603 contributes to the L-methionine binding site. Glutamate 609 is a binding site for 5-methyltetrahydropteroyltri-L-glutamate. Zn(2+)-binding residues include histidine 645, cysteine 647, and glutamate 669. Histidine 698 (proton donor) is an active-site residue. Cysteine 730 is a binding site for Zn(2+).

This sequence belongs to the vitamin-B12 independent methionine synthase family. It depends on Zn(2+) as a cofactor.

The enzyme catalyses 5-methyltetrahydropteroyltri-L-glutamate + L-homocysteine = tetrahydropteroyltri-L-glutamate + L-methionine. The protein operates within amino-acid biosynthesis; L-methionine biosynthesis via de novo pathway; L-methionine from L-homocysteine (MetE route): step 1/1. Catalyzes the transfer of a methyl group from 5-methyltetrahydrofolate to homocysteine resulting in methionine formation. This is 5-methyltetrahydropteroyltriglutamate--homocysteine methyltransferase from Coxiella burnetii (strain Dugway 5J108-111).